The sequence spans 533 residues: Non-specific phospholipase C1 (533 aa).

Positions Met1–Ser22 are cleaved as a signal peptide.

This sequence belongs to the bacterial phospholipase C family. As to expression, expressed in roots, leaves, stems, flowers and siliques.

Its subcellular location is the secreted. The sequence is that of Non-specific phospholipase C1 (NPC1) from Arabidopsis thaliana (Mouse-ear cress).